Consider the following 68-residue polypeptide: Large ribosomal subunit protein bL35 (68 aa).

The protein belongs to the bacterial ribosomal protein bL35 family.

The protein is Large ribosomal subunit protein bL35 of Persephonella marina (strain DSM 14350 / EX-H1).